Reading from the N-terminus, the 189-residue chain is Gluconokinase (189 aa).

Residue 16-23 (GVSGAGKS) coordinates ATP.

The protein belongs to the gluconokinase GntK/GntV family. Monomer.

The enzyme catalyses D-gluconate + ATP = 6-phospho-D-gluconate + ADP + H(+). Its pathway is carbohydrate acid metabolism; D-gluconate degradation. Functionally, phosphorylates gluconate to 6-phosphogluconate. The chain is Gluconokinase from Arabidopsis thaliana (Mouse-ear cress).